We begin with the raw amino-acid sequence, 966 residues long: Aminopeptidase N (966 aa).

Residues methionine 1–serine 8 are Cytoplasmic-facing. The chain crosses the membrane as a helical; Signal-anchor for type II membrane protein span at residues lysine 9–valine 32. Residues tyrosine 33–serine 68 are cytosolic Ser/Thr-rich junction. At tyrosine 33–serine 966 the chain is on the extracellular side. The interval glutamate 42–alanine 64 is disordered. Residues serine 44 to alanine 64 are compositionally biased toward low complexity. Residues lysine 69–serine 966 are metalloprotease. N-linked (GlcNAc...) asparagine glycosylation is found at asparagine 106, asparagine 114, and asparagine 128. The residue at position 176 (tyrosine 176) is a Sulfotyrosine. 4 N-linked (GlcNAc...) asparagine glycosylation sites follow: asparagine 234, asparagine 288, asparagine 318, and asparagine 332. Residue glycine 351–asparagine 355 participates in substrate binding. Residue histidine 387 participates in Zn(2+) binding. The Proton acceptor role is filled by glutamate 388. 2 residues coordinate Zn(2+): histidine 391 and glutamate 410. Tyrosine 418 and tyrosine 423 each carry sulfotyrosine. 4 N-linked (GlcNAc...) asparagine glycosylation sites follow: asparagine 573, asparagine 606, asparagine 624, and asparagine 734. Residues cysteine 760 and cysteine 767 are joined by a disulfide bond. N-linked (GlcNAc...) asparagine glycans are attached at residues asparagine 784 and asparagine 817. A disulfide bond links cysteine 797 and cysteine 833. Tyrosine 852 is subject to Phosphotyrosine.

It belongs to the peptidase M1 family. Homodimer. Interacts with SLC6A19. It depends on Zn(2+) as a cofactor. In terms of processing, N- and O-glycosylated. Sulfated. Post-translationally, may undergo proteolysis and give rise to a soluble form. In terms of tissue distribution, expressed in the intestinal brush border (at protein level). Highly expressed in intestinal tract and kidney, present in liver, lymph node, spleen, and brain. Found as well in monocytes, macrophages, dendritic cells, veiled cells and B-cells but not on T-cells and thymocytes.

It is found in the cell membrane. The enzyme catalyses Release of an N-terminal amino acid, Xaa-|-Yaa- from a peptide, amide or arylamide. Xaa is preferably Ala, but may be most amino acids including Pro (slow action). When a terminal hydrophobic residue is followed by a prolyl residue, the two may be released as an intact Xaa-Pro dipeptide.. Its function is as follows. Broad specificity aminopeptidase which plays a role in the final digestion of peptides generated from hydrolysis of proteins by gastric and pancreatic proteases. Also involved in the processing of various peptides including peptide hormones, such as angiotensin III and IV, neuropeptides, and chemokines. May also be involved the cleavage of peptides bound to major histocompatibility complex class II molecules of antigen presenting cells. May have a role in angiogenesis and promote cholesterol crystallization. May have a role in amino acid transport by acting as binding partner of amino acid transporter SLC6A19 and regulating its activity. The polypeptide is Aminopeptidase N (Anpep) (Mus musculus (Mouse)).